We begin with the raw amino-acid sequence, 77 residues long: Large ribosomal subunit protein uL29 (77 aa).

This sequence belongs to the universal ribosomal protein uL29 family.

The sequence is that of Large ribosomal subunit protein uL29 from Mycolicibacterium vanbaalenii (strain DSM 7251 / JCM 13017 / BCRC 16820 / KCTC 9966 / NRRL B-24157 / PYR-1) (Mycobacterium vanbaalenii).